We begin with the raw amino-acid sequence, 113 residues long: Mitochondrial import inner membrane translocase subunit tim16 (113 aa).

The tract at residues 56–108 (KILGLENVETVSKEDIDKKYNELLTINDPKDGGSEYLQIKISGAKHCLHSALK) is J-like.

This sequence belongs to the TIM16/PAM16 family. In terms of assembly, probable component of the PAM complex at least composed of a mitochondrial HSP70 protein, grepE, tim16 and tim14. Associates with the TIM23 complex.

The protein localises to the mitochondrion inner membrane. Functionally, regulates ATP-dependent protein translocation into the mitochondrial matrix. The chain is Mitochondrial import inner membrane translocase subunit tim16 (timm16) from Dictyostelium discoideum (Social amoeba).